Consider the following 250-residue polypeptide: Flavin-dependent thymidylate synthase (250 aa).

The 227-residue stretch at 7-233 folds into the ThyX domain; sequence LSVELIACSS…PTVFGDFEIE (227 aa). DUMP-binding positions include 92-95, 103-107, and R172; these read ELVR and QLSQR. FAD contacts are provided by residues 95–97 and Q103; that span reads RHR. The short motif at 95–105 is the ThyX motif element; that stretch reads RHRHFSFSQLS. FAD-binding positions include 188–190 and H194; that span reads NFR. DUMP is bound at residue R199. R199 (involved in ionization of N3 of dUMP, leading to its activation) is an active-site residue.

This sequence belongs to the thymidylate synthase ThyX family. Homotetramer. FAD is required as a cofactor.

The catalysed reaction is dUMP + (6R)-5,10-methylene-5,6,7,8-tetrahydrofolate + NADPH + H(+) = dTMP + (6S)-5,6,7,8-tetrahydrofolate + NADP(+). It participates in pyrimidine metabolism; dTTP biosynthesis. Catalyzes the reductive methylation of 2'-deoxyuridine-5'-monophosphate (dUMP) to 2'-deoxythymidine-5'-monophosphate (dTMP) while utilizing 5,10-methylenetetrahydrofolate (mTHF) as the methyl donor, and NADPH and FADH(2) as the reductant. This Corynebacterium glutamicum (strain ATCC 13032 / DSM 20300 / JCM 1318 / BCRC 11384 / CCUG 27702 / LMG 3730 / NBRC 12168 / NCIMB 10025 / NRRL B-2784 / 534) protein is Flavin-dependent thymidylate synthase.